Consider the following 496-residue polypeptide: MINTQNKKFNKYFVPCLGGIFGGIATSTHFWLLFMPLSLFILWSRSDKKLANFLWGFFFILVSHSWLYELHPLTWLGFSWISSLIISISILFGCSIIGGILVYLWGLLVKKILQKKEISNMNSLRLTIKVLLLSFAWGIGEFILSQTPLFWIGLGEGIVPGDLYLAGLARWIGASGLCVVQLTIGFWIYLIYEKWKRKYHFKKTFLFGLLILVILHFLGGLTNPIERNNDYPVALWQTNMPTREKTNFKNQFINDKLISAQKIALSNDAKLLITPEGTLNNNFNLNFKSKIRMLAGGFRNSKNGLRSSLLGYQIGDKTYSSFIDKHRLVPLGEKIPGFLNIFSRGLSAVGGIQPGSDSRFFKWKFTQPLAIAICYEITDGFKIRNAVKSGAELIISAANLDPYPRKLHYQFLSLARVRSIENKKDNIIISNTGPSGLISEEGKIIKLFDPNTEQNDVVNPNFSIEKTFYTTYGERPLFLLCLFLIGLNLYFGKFTN.

Helical transmembrane passes span glycine 23–tryptophan 43, leucine 50–leucine 70, leucine 84–leucine 104, leucine 126–glutamine 146, tryptophan 171–isoleucine 191, and phenylalanine 205–isoleucine 225. In terms of domain architecture, CN hydrolase spans tryptophan 236–isoleucine 464. Catalysis depends on glutamate 276, which acts as the Proton acceptor. The active site involves lysine 325. Cysteine 374 acts as the Nucleophile in catalysis. Residues proline 476–asparagine 496 form a helical membrane-spanning segment.

The protein belongs to the CN hydrolase family. Apolipoprotein N-acyltransferase subfamily.

Its subcellular location is the cell inner membrane. It catalyses the reaction N-terminal S-1,2-diacyl-sn-glyceryl-L-cysteinyl-[lipoprotein] + a glycerophospholipid = N-acyl-S-1,2-diacyl-sn-glyceryl-L-cysteinyl-[lipoprotein] + a 2-acyl-sn-glycero-3-phospholipid + H(+). It functions in the pathway protein modification; lipoprotein biosynthesis (N-acyl transfer). Catalyzes the phospholipid dependent N-acylation of the N-terminal cysteine of apolipoprotein, the last step in lipoprotein maturation. This is Apolipoprotein N-acyltransferase from Prochlorococcus marinus subsp. pastoris (strain CCMP1986 / NIES-2087 / MED4).